Reading from the N-terminus, the 113-residue chain is Hydrogenase maturation factor HypA (113 aa).

His-2 is a binding site for Ni(2+). Residues Cys-73, Cys-76, Cys-89, and Cys-92 each coordinate Zn(2+).

This sequence belongs to the HypA/HybF family.

Its function is as follows. Involved in the maturation of [NiFe] hydrogenases. Required for nickel insertion into the metal center of the hydrogenase. The chain is Hydrogenase maturation factor HypA from Rhodopseudomonas palustris (strain BisA53).